The sequence spans 396 residues: Phosphoglycerate kinase (396 aa).

Residues 21–23 (DFN), arginine 36, 59–62 (HLGK), arginine 119, and arginine 156 each bind substrate. ATP-binding positions include lysine 206, glycine 294, glutamate 325, and 352-355 (GGDS).

It belongs to the phosphoglycerate kinase family. As to quaternary structure, monomer.

It is found in the cytoplasm. The catalysed reaction is (2R)-3-phosphoglycerate + ATP = (2R)-3-phospho-glyceroyl phosphate + ADP. It functions in the pathway carbohydrate degradation; glycolysis; pyruvate from D-glyceraldehyde 3-phosphate: step 2/5. The polypeptide is Phosphoglycerate kinase (Listeria innocua serovar 6a (strain ATCC BAA-680 / CLIP 11262)).